The following is an 856-amino-acid chain: Cyclic di-GMP phosphodiesterase PdeB (856 aa).

Helical transmembrane passes span 7–27 (ILVF…YCLG) and 230–250 (WVSL…YVWL). Positions 303–350 (QKERGKITLESIAEAVILTDIEAKVIYMNPKAETLLEVASSNAVGESL) constitute a PAS domain. One can recognise a GGDEF domain in the interval 454–587 (RSLAVCYLDL…GTNQIHIYDD (134 aa)). The EAL domain occupies 598 to 852 (APKWAVRIAQ…SYCEQFETRL (255 aa)).

The protein resides in the cell membrane. The catalysed reaction is 3',3'-c-di-GMP + H2O = 5'-phosphoguanylyl(3'-&gt;5')guanosine + H(+). Its function is as follows. Affects motility and biofilm formation, and is linked to the regulation of sulfate uptake and assimilation. The chain is Cyclic di-GMP phosphodiesterase PdeB (pdeB) from Shewanella oneidensis (strain ATCC 700550 / JCM 31522 / CIP 106686 / LMG 19005 / NCIMB 14063 / MR-1).